The primary structure comprises 412 residues: Putative competence-damage inducible protein (412 aa).

Belongs to the CinA family.

The chain is Putative competence-damage inducible protein from Bacillus mycoides (strain KBAB4) (Bacillus weihenstephanensis).